We begin with the raw amino-acid sequence, 183 residues long: Shikimate kinase (183 aa).

Residue 15-20 (GSGKST) coordinates ATP. Mg(2+) is bound at residue serine 19. Residues aspartate 37, arginine 61, and glycine 85 each contribute to the substrate site. Residue arginine 123 coordinates ATP. Arginine 142 provides a ligand contact to substrate.

It belongs to the shikimate kinase family. As to quaternary structure, monomer. Requires Mg(2+) as cofactor.

It is found in the cytoplasm. It carries out the reaction shikimate + ATP = 3-phosphoshikimate + ADP + H(+). It functions in the pathway metabolic intermediate biosynthesis; chorismate biosynthesis; chorismate from D-erythrose 4-phosphate and phosphoenolpyruvate: step 5/7. Its function is as follows. Catalyzes the specific phosphorylation of the 3-hydroxyl group of shikimic acid using ATP as a cosubstrate. The polypeptide is Shikimate kinase (Paracidovorax citrulli (strain AAC00-1) (Acidovorax citrulli)).